Here is a 352-residue protein sequence, read N- to C-terminus: MRIEQLREHLRALGARPGHEQSVLRHWACALPQQRRSAREDVLPLALREALPALEAELQGLARLRSEHSAEDGSARLLVALADGQTVESVLLPRDGLCVSTQVGCAVGCVFCMTGQGGLLRQLGSAEIVAQVALARGHRAVKKVVFMGMGEPAHNLDNVLEAIELLGTAGGIGHKNLVFSTVGDERVFERLPQGAVKPALALSLHTTKPELRAQLLPRAPRIAPEDLVAHGERYARATGYPVQYQWTLIDGVNDGDDELDGIVRLLAGRYAVMNLIPYNTVDGLAFQRPAWERAVAMAGALHRRGVLTKLRRSAGQDVEGGCGQLRARALGGARWIKIEPVSGTGAHHVDQF.

Catalysis depends on E88, which acts as the Proton acceptor. The Radical SAM core domain maps to 91-317 (LLPRDGLCVS…TKLRRSAGQD (227 aa)). A disulfide bond links C98 and C322. [4Fe-4S] cluster is bound by residues C105, C109, and C112. S-adenosyl-L-methionine-binding positions include 150-151 (GE), S180, 203-205 (SLH), and N279. Residue C322 is the S-methylcysteine intermediate of the active site.

This sequence belongs to the radical SAM superfamily. RlmN family. [4Fe-4S] cluster is required as a cofactor.

It is found in the cytoplasm. This is Probable RNA methyltransferase Mpe_A3613 from Methylibium petroleiphilum (strain ATCC BAA-1232 / LMG 22953 / PM1).